Consider the following 124-residue polypeptide: Large ribosomal subunit protein bL12 (124 aa).

Belongs to the bacterial ribosomal protein bL12 family. As to quaternary structure, homodimer. Part of the ribosomal stalk of the 50S ribosomal subunit. Forms a multimeric L10(L12)X complex, where L10 forms an elongated spine to which 2 to 4 L12 dimers bind in a sequential fashion. Binds GTP-bound translation factors.

Its function is as follows. Forms part of the ribosomal stalk which helps the ribosome interact with GTP-bound translation factors. Is thus essential for accurate translation. The chain is Large ribosomal subunit protein bL12 from Christiangramia forsetii (strain DSM 17595 / CGMCC 1.15422 / KT0803) (Gramella forsetii).